Reading from the N-terminus, the 497-residue chain is 5'-AMP-activated protein kinase subunit gamma-3 (497 aa).

The tract at residues 16–143 is disordered; that stretch reads STQTPSWSSF…SSSSTDDLDQ (128 aa). The segment covering 39–54 has biased composition (polar residues); sequence GDSTSWPSPAMTTSAE. The segment covering 68-79 has biased composition (basic and acidic residues); it reads KSQEDVEERELP. CBS domains lie at 204–265, 287–345, and 363–423; these read MATS…RSPL, CFKP…QRTL, and TFRD…HLDI. Residues R232, 247–252, V292, 313–314, and K332 contribute to the ADP site; these read MLTITD and HR. AMP-binding positions include R232, 247-252, V292, H313, 313-314, K332, T363, A368, 389-390, 405-408, R432, L440, H461, 461-462, and 477-480; these read MLTITD, HR, SA, SRFD, and SLSD. ATP-binding positions include R232, 247–252, V292, 313–314, R314, and K332; these read MLTITD and HR. An AMPK pseudosubstrate motif is present at residues 300-321; it reads LFEAVYTLIKNRIHRLPVLDPV. ADP is bound by residues 405-408, R432, L440, and 461-462; these read SRFD and HR. Residues 405–408, R432, L440, and 461–462 each bind ATP; these read SRFD and HR. In terms of domain architecture, CBS 4 spans 435–494; the sequence is CLEGVLSCQPHETLGEVIDRIAREQVHRLVLVDETQHLLGVVSLSDILQALVLSPAGIDA.

It belongs to the 5'-AMP-activated protein kinase gamma subunit family. In terms of assembly, AMPK is a heterotrimer of an alpha catalytic subunit (PRKAA1 or PRKAA2), a beta (PRKAB1 or PRKAB2) and a gamma non-catalytic subunits (PRKAG1, PRKAG2 or PRKAG3). Interacts with FNIP1 and FNIP2. Phosphorylated by ULK1; leading to negatively regulate AMPK activity and suggesting the existence of a regulatory feedback loop between ULK1 and AMPK. In terms of processing, glycosylated; O-GlcNAcylated by OGT, promoting the AMP-activated protein kinase (AMPK) activity.

Functionally, AMP/ATP-binding subunit of AMP-activated protein kinase (AMPK), an energy sensor protein kinase that plays a key role in regulating cellular energy metabolism. In response to reduction of intracellular ATP levels, AMPK activates energy-producing pathways and inhibits energy-consuming processes: inhibits protein, carbohydrate and lipid biosynthesis, as well as cell growth and proliferation. AMPK acts via direct phosphorylation of metabolic enzymes, and by longer-term effects via phosphorylation of transcription regulators. AMPK also acts as a regulator of cellular polarity by remodeling the actin cytoskeleton; probably by indirectly activating myosin. The AMPK gamma3 subunit is a non-catalytic subunit with a regulatory role in muscle energy metabolism. It mediates binding to AMP, ADP and ATP, leading to AMPK activation or inhibition: AMP-binding results in allosteric activation of alpha catalytic subunit (PRKAA1 or PRKAA2) both by inducing phosphorylation and preventing dephosphorylation of catalytic subunits. ADP also stimulates phosphorylation, without stimulating already phosphorylated catalytic subunit. ATP promotes dephosphorylation of catalytic subunit, rendering the AMPK enzyme inactive. The polypeptide is 5'-AMP-activated protein kinase subunit gamma-3 (PRKAG3) (Bos taurus (Bovine)).